We begin with the raw amino-acid sequence, 919 residues long: Glutamate receptor ionotropic, kainate 3 (919 aa).

The first 31 residues, 1–31, serve as a signal peptide directing secretion; sequence MTAPWRRLRSLVWEYWAGLLVCAFWIPDSRG. Residues 32–563 lie on the Extracellular side of the membrane; the sequence is MPHVIRIGGI…VFSFLNPLSP (532 aa). N-linked (GlcNAc...) asparagine glycans are attached at residues Asn70, Asn76, Asn278, Asn381, Asn415, Asn426, and Asn433. Cysteines 99 and 350 form a disulfide. L-glutamate contacts are provided by Pro518, Thr520, and Arg525. 2 N-linked (GlcNAc...) asparagine glycosylation sites follow: Asn548 and Asn551. The chain crosses the membrane as a helical span at residues 564 to 584; that stretch reads DIWMYVLLAYLGVSCVLFVIA. Residues 585–636 lie on the Cytoplasmic side of the membrane; the sequence is RFSPYEWYDAHPCNPGSEVVENNFTLLNSFWFGMGSLMQQGSELMPKALSTR. A helical membrane pass occupies residues 637 to 657; sequence IIGGIWWFFTLIIISSYTANL. Residues 658-820 lie on the Extracellular side of the membrane; it reads AAFLTVERME…KEASALGIQK (163 aa). L-glutamate contacts are provided by Ala691, Thr692, and Glu739. Residue Asn752 is glycosylated (N-linked (GlcNAc...) asparagine). The chain crosses the membrane as a helical span at residues 821–841; the sequence is IGGIFIVLAAGLVLSVLVAVG. At 842–919 the chain is on the cytoplasmic side; the sequence is EFVYKLRKTA…CSTSLAPVFP (78 aa). Ser869 bears the Phosphoserine mark. Lys887 is covalently cross-linked (Glycyl lysine isopeptide (Lys-Gly) (interchain with G-Cter in SUMO1)).

This sequence belongs to the glutamate-gated ion channel (TC 1.A.10.1) family. GRIK3 subfamily. As to quaternary structure, homotetramer, and heterotetramer with either GRIK4 or GRIK5. Can form functional heteromeric receptors with GRIK2. Interacts with PRKCABP. Interacts with NETO2.

It is found in the cell membrane. The protein resides in the postsynaptic cell membrane. The catalysed reaction is Ca(2+)(in) = Ca(2+)(out). In terms of biological role, ionotropic glutamate receptor that functions as a cation-permeable ligand-gated ion channel, gated by L-glutamate and the glutamatergic agonist kainic acid. Binding of the excitatory neurotransmitter L-glutamate induces a conformation change, leading to the opening of the cation channel, and thereby converts the chemical signal to an electrical impulse. The receptor then desensitizes rapidly and enters a transient inactive state, characterized by the presence of bound agonist. In association with GRIK2, involved in presynaptic facilitation of glutamate release at hippocampal mossy fiber synapses. In Homo sapiens (Human), this protein is Glutamate receptor ionotropic, kainate 3 (GRIK3).